The sequence spans 507 residues: Cytochrome c-552 (507 aa).

An N-terminal signal peptide occupies residues 1 to 22; sequence MTKFKLLLAGSLVAIVSMGLLA. Heme c is bound by residues His102, Cys130, Cys133, Lys134, Cys168, Cys171, His172, Cys211, Cys214, and His215. Glu217, Tyr218, Lys274, and Gln276 together coordinate Ca(2+). Tyr218 serves as a coordination point for substrate. His277 lines the substrate pocket. Residues His288, Cys295, Cys298, His299, His313, Cys326, Cys329, His330, and His405 each coordinate heme c.

Belongs to the cytochrome c-552 family. As to quaternary structure, homodimer. Interacts with NrfH. May form a heterotetramer with NrfH. Ca(2+) is required as a cofactor. It depends on heme c as a cofactor.

Its subcellular location is the periplasm. It carries out the reaction 6 Fe(III)-[cytochrome c] + NH4(+) + 2 H2O = 6 Fe(II)-[cytochrome c] + nitrite + 8 H(+). The protein operates within nitrogen metabolism; nitrate reduction (assimilation). Its function is as follows. Catalyzes the reduction of nitrite to ammonia, consuming six electrons in the process. Has very low activity toward hydroxylamine, and even lower activity toward sulfite. Sulfite reductase activity is maximal at neutral pH. This chain is Cytochrome c-552 (nrfA), found in Wolinella succinogenes (strain ATCC 29543 / DSM 1740 / CCUG 13145 / JCM 31913 / LMG 7466 / NCTC 11488 / FDC 602W) (Vibrio succinogenes).